We begin with the raw amino-acid sequence, 569 residues long: MRICGIKLTHDGAIAVVEDGRRLFCVEQEKRGNGPRYQSVDNLDAVVFALAEHGLNPRDIDQFVIDGWDGENESQFQLLSGAVPVALKGAPYVERHAEGLLDSVDGYGLLLGGEEFPYKSYPHVTGHVASAYSTSPFASAGKPALCLVWDGCIFPRLYYVEPQGARLIGSLFPMIGHAYAAAGLHFGPYRQPNRSSWDLGIAGKLMAYIELGSVDESIVEVFQGLYETRSAADTEQARRYRENINNAEASLAVIHDFFESSALRLKAKRAEDVLASFHVFLERLLVKEIAMVLLRHSSLPGARNLCIAGGCGLNIKWNSALRATGLFDDVWVPPFPNDSGSAIGAACGAMAAQDGFEPLEWSVYSGPALQESEVPPDWEAAPCSLPELASILADNKPVIFLSGCAGLGPRALGGRSILAAPTSPEMKDHLNDIKRREHFRPVVPICLEDRAPEIFSPGTPDPYMLFDHQTRANWRDKIPAVVHLDGSARLQTISRNSPHKIAALLIEFEQLTGIPLLCTTSANLHGRGFFPDAAAACQWGRVEHVWCEGMLWSKTVIKKSSPTERLLSA.

This sequence belongs to the NodU/CmcH family.

Its function is as follows. Involved in 6-O-carbamoylation of Nod-factors. The polypeptide is Nodulation protein U (nodU) (Bradyrhizobium diazoefficiens (strain JCM 10833 / BCRC 13528 / IAM 13628 / NBRC 14792 / USDA 110)).